We begin with the raw amino-acid sequence, 105 residues long: Large ribosomal subunit protein bL21 (105 aa).

It belongs to the bacterial ribosomal protein bL21 family. In terms of assembly, part of the 50S ribosomal subunit. Contacts protein L20.

This protein binds to 23S rRNA in the presence of protein L20. The polypeptide is Large ribosomal subunit protein bL21 (Blochmanniella pennsylvanica (strain BPEN)).